The following is a 314-amino-acid chain: DNA-directed RNA polymerase subunit alpha (314 aa).

The alpha N-terminal domain (alpha-NTD) stretch occupies residues 1–229 (MLESKLKAPV…EHLNYFANPE (229 aa)). Positions 246–314 (SAEEDLDLPL…LAKKGFTLKE (69 aa)) are alpha C-terminal domain (alpha-CTD).

It belongs to the RNA polymerase alpha chain family. Homodimer. The RNAP catalytic core consists of 2 alpha, 1 beta, 1 beta' and 1 omega subunit. When a sigma factor is associated with the core the holoenzyme is formed, which can initiate transcription.

It carries out the reaction RNA(n) + a ribonucleoside 5'-triphosphate = RNA(n+1) + diphosphate. In terms of biological role, DNA-dependent RNA polymerase catalyzes the transcription of DNA into RNA using the four ribonucleoside triphosphates as substrates. The chain is DNA-directed RNA polymerase subunit alpha (rpoA) from Thermus aquaticus.